We begin with the raw amino-acid sequence, 399 residues long: UDP-galactopyranose mutase (399 aa).

FAD-binding residues include Phe18, Glu38, Asn46, and Leu66. The UDP-alpha-D-galactose site is built by Phe157, Thr162, Trp166, and Tyr191. 224-225 (DW) contacts FAD. UDP-alpha-D-galactose contacts are provided by Asn282, Arg292, and Tyr328. An FAD-binding site is contributed by Arg360. Residue Tyr366 participates in UDP-alpha-D-galactose binding. 367–369 (LDM) lines the FAD pocket.

The protein belongs to the UDP-galactopyranose/dTDP-fucopyranose mutase family. Homotetramer. The cofactor is FAD.

It catalyses the reaction UDP-alpha-D-galactose = UDP-alpha-D-galactofuranose. The protein operates within cell wall biogenesis; cell wall polysaccharide biosynthesis. Functionally, catalyzes the interconversion through a 2-keto intermediate of uridine diphosphogalactopyranose (UDP-GalP) into uridine diphosphogalactofuranose (UDP-GalF) which is a key building block for cell wall construction in Mycobacterium tuberculosis. The polypeptide is UDP-galactopyranose mutase (glf) (Mycobacterium tuberculosis (strain CDC 1551 / Oshkosh)).